Reading from the N-terminus, the 124-residue chain is MATINQLVRKPRAKQVVKSNVPALEACPQKRGVCTRVYTTTPKKPNSALRKVCRVRLTNGFEVTSYIGGEGHNLQEHSVVLIRGGRVKDLPGVRYHTVRGALDCAGVNDRKKGRSKYGVKRPKS.

Asp-89 carries the post-translational modification 3-methylthioaspartic acid.

This sequence belongs to the universal ribosomal protein uS12 family. As to quaternary structure, part of the 30S ribosomal subunit. Contacts proteins S8 and S17. May interact with IF1 in the 30S initiation complex.

Its function is as follows. With S4 and S5 plays an important role in translational accuracy. Interacts with and stabilizes bases of the 16S rRNA that are involved in tRNA selection in the A site and with the mRNA backbone. Located at the interface of the 30S and 50S subunits, it traverses the body of the 30S subunit contacting proteins on the other side and probably holding the rRNA structure together. The combined cluster of proteins S8, S12 and S17 appears to hold together the shoulder and platform of the 30S subunit. The sequence is that of Small ribosomal subunit protein uS12 from Aliivibrio fischeri (strain ATCC 700601 / ES114) (Vibrio fischeri).